Reading from the N-terminus, the 387-residue chain is Phosphoglycerate kinase (387 aa).

Substrate-binding positions include 21–23, Arg36, and 59–62; these read DLN and HLGR. Lys84 bears the N6-acetyllysine mark. 2 residues coordinate substrate: Arg113 and Arg146. Residues Lys197, Glu314, and 340–343 contribute to the ATP site; that span reads GGDT.

It belongs to the phosphoglycerate kinase family. Monomer.

It is found in the cytoplasm. The catalysed reaction is (2R)-3-phosphoglycerate + ATP = (2R)-3-phospho-glyceroyl phosphate + ADP. Its pathway is carbohydrate degradation; glycolysis; pyruvate from D-glyceraldehyde 3-phosphate: step 2/5. The polypeptide is Phosphoglycerate kinase (Escherichia coli O139:H28 (strain E24377A / ETEC)).